Consider the following 38-residue polypeptide: Lebetin-2-alpha (38 aa).

A disordered region spans residues 1 to 38; the sequence is GDNKPPKKGPPNGCFGHKIDRIGSHSGLGCNKVDDNKG. Residues Cys-14 and Cys-30 are joined by a disulfide bond.

It belongs to the natriuretic peptide family. In terms of tissue distribution, expressed by the venom gland.

Its subcellular location is the secreted. In terms of biological role, inhibits platelet aggregation induced by thrombin, collagen and PAF-acether. Human platelet aggregation induced by thrombin is inhibited by synthetic lebetin-1-alpha with (IC(50)=140 nM). In vivo, inhibits collagen-induced thrombocytopenia in rats. Is not toxic upon intravenous injection into mice and rats. Inhibits platelet aggregation induced by thrombin, collagen and PAF-acether. Human platelet aggregation induced by thrombin is inhibited by synthetic lebetin-1-beta with (IC(50)=32 nM). In vivo, inhibits collagen-induced thrombocytopenia in rats. Is not toxic upon intravenous injection into mice and rats. Functionally, inhibits platelet aggregation induced by thrombin, collagen and PAF-acether. Human platelet aggregation induced by thrombin is inhibited by synthetic lebetin-1-gamma with (IC(50)=5 nM). In vivo, inhibits collagen-induced thrombocytopenia in rats. Is not toxic upon intravenous injection into mice and rats. Its function is as follows. Inhibits platelet aggregation induced by thrombin, collagen and PAF-acether. Human platelet aggregation induced by thrombin is inhibited by synthetic lebetin-1-alpha with (IC(50)=2.5 nM). In vivo, inhibits collagen-induced thrombocytopenia in rats. Is not toxic upon intravenous injection into mice and rats. In terms of biological role, inhibits platelet aggregation induced by thrombin, collagen and PAF-acether. Human platelet aggregation induced by thrombin is inhibited by synthetic lebetin-1-alpha with (IC(50)=2.8 nM). In vivo, inhibits collagen-induced thrombocytopenia in rats. Is not toxic upon intravenous injection into mice and rats. This Macrovipera lebetinus (Levantine viper) protein is Lebetin-2-alpha.